Reading from the N-terminus, the 1052-residue chain is SWI/SNF-related matrix-associated actin-dependent regulator of chromatin subfamily A member 5 (1052 aa).

Residues 1 to 15 (MSSAAEPPPPPPPES) show a composition bias toward pro residues. Residues 1–83 (MSSAAEPPPP…QEPDPTYEEK (83 aa)) form a disordered region. An N-acetylserine modification is found at S2. The span at 16–55 (APSKPAASIASGGSNSSNKGGPEGVAAQAVASAASAGPAD) shows a compositional bias: low complexity. The residue at position 66 (S66) is a Phosphoserine. The segment covering 69–83 (KQKEIQEPDPTYEEK) has biased composition (basic and acidic residues). K83 is covalently cross-linked (Glycyl lysine isopeptide (Lys-Gly) (interchain with G-Cter in SUMO2)). T113 bears the Phosphothreonine mark. Residues S116, S137, and S171 each carry the phosphoserine modification. A Helicase ATP-binding domain is found at 192–357 (ISLYENGING…WSLLNFLLPD (166 aa)). 205-212 (DEMGLGKT) serves as a coordination point for ATP. The DEAH box motif lies at 308–311 (DEAH). K440 carries the post-translational modification N6-acetyllysine. The Helicase C-terminal domain occupies 487–638 (VLDKLLPKLK…SIVIQQGRLV (152 aa)). Glycyl lysine isopeptide (Lys-Gly) (interchain with G-Cter in SUMO2) cross-links involve residues K644, K647, K694, K722, and K735. A phosphoserine mark is found at S755 and S825. SANT domains lie at 840 to 892 (QGFT…ERCN) and 943 to 1007 (KGKN…LITL). A Glycyl lysine isopeptide (Lys-Gly) (interchain with G-Cter in SUMO2) cross-link involves residue K966. Positions 1015-1052 (LEEKEKAEKKKRGPKPSTQKRKMDGAPDGRGRKKKLKL) are disordered. The segment covering 1023 to 1034 (KKKRGPKPSTQK) has biased composition (basic residues). Basic and acidic residues predominate over residues 1035–1044 (RKMDGAPDGR).

This sequence belongs to the SNF2/RAD54 helicase family. ISWI subfamily. In terms of assembly, component of the ACF-5 ISWI chromatin-remodeling complex (also called the ACF/WCRF complex) at least composed of SMARCA5/SNF2H and BAZ1A/ACF1, which regulates the spacing of histone octamers on the DNA template to facilitate access to DNA. Within the complex interacts with BAZ1A/ACF1; the interaction is direct and is required to slide nucleosomes from end to center positions on a DNA template in an ATP-dependent manner. Component of the CHRAC ISWI chromatin-remodeling complex at least composed of SMARCA5/SNF2H, BAZ1A/ACF1, CHRAC1 and POLE3; the complex preferentially binds DNA through the CHRAC1-POLE3 heterodimer and possesses ATP-dependent nucleosome-remodeling activity. Within the complex interacts with BAZ1A/ACF1; the interaction is direct and promotes the interaction with the POLE3-CHRAC1 heterodimer. Within the complex interacts with the POLE3-CHRAC1 heterodimer; the interaction is direct and enhances nucleosome sliding activity by the SMARCA5/SNF2H and BAZ1A/ACF1 interaction. Neither POLE3 nor CHRAC1 enhances nucleosome sliding activity of the ACF-5 ISWI chromatin remodeling complex. Component of the WICH-5 ISWI chromatin-remodeling complex (also called the WICH complex) at least composed of SMARCA5/SNF2H and BAZ1B/WSTF, which regulates the spacing of histone octamers on the DNA template to facilitate access to DNA. Within the complex interacts with BAZ1B/WSTF. Component of the NoRC-5 ISWI chromatin-remodeling complex (also called the NoRC chromatin-remodeling complex) at least composed of SMARCA5/SNF2H and BAZ2A/TIP5; the complex suppresses rDNA transcription by a combination of nucleosome remodeling, histone deacetylation, and DNA methylation. Within the complex interacts with BAZ2A/TIP5. Within the complex interacts with HDAC1. Component of the BRF-5 ISWI chromatin-remodeling complex at least composed of SMARCA5/SNF2H and BAZ2B. Within the complex interacts with BAZ2B. Component of the NURF-5 ISWI chromatin-remodeling complex at least composed of SMARCA5/SNF2H and BPTF. Within the complex interacts with BPFT. Component of the CERF-5 ISWI chromatin-remodeling complex at least composed of SMARCA5/SNF2H and CECR2. LUZP1 is detected as part of the CERF-5 complex in embryonic stem cells where it is involved in complex stabilization but is not detected in the complex in the testis. Within the complex interacts with CECR2. Component of the RSF-5 ISWI chromatin-remodeling complex (also called the RSF complex) at least composed of SMARCA5/SNF2H and RSF1. Within the complex interacts with RSF1. Interacts with the cohesin complex component RAD21; the interaction is direct. Interacts with the NuRD complex components HDAC2, RBBP4 and CHD4; the interactions are direct. Interacts with PCNA. Component of the B-WICH complex, at least composed of SMARCA5/SNF2H, BAZ1B/WSTF, SF3B1, DEK, MYO1C, ERCC6, MYBBP1A and DDX21 which positively regulates RNA polymerase III transcription. Interacts with MYO1C. Interacts with BEND3. Interacts with SIRT6; promoting recruitment to DNA damage sites. As to quaternary structure, (Microbial infection) Interacts with JC virus small t antigen. (Microbial infection) Interacts with Epstein Barr virus (EBV) lytic switch protein BZLF1; this interaction participates to the activation of early lytic viral genes by BZLF1. Ubiquitously expressed.

It is found in the nucleus. The protein localises to the chromosome. The enzyme catalyses ATP + H2O = ADP + phosphate + H(+). In terms of biological role, ATPase that possesses intrinsic ATP-dependent nucleosome-remodeling activity. Catalytic subunit of ISWI chromatin-remodeling complexes, which form ordered nucleosome arrays on chromatin and facilitate access to DNA during DNA-templated processes such as DNA replication, transcription, and repair; this may require intact histone H4 tails. Within the ISWI chromatin-remodeling complexes, slides edge- and center-positioned histone octamers away from their original location on the DNA template. Catalytic activity and histone octamer sliding propensity is regulated and determined by components of the ISWI chromatin-remodeling complexes. The BAZ1A/ACF1-, BAZ1B/WSTF-, BAZ2A/TIP5- and BAZ2B-containing ISWI chromatin-remodeling complexes regulate the spacing of nucleosomes along the chromatin and have the ability to slide mononucleosomes to the center of a DNA template in an ATP-dependent manner. The CECR2- and RSF1-containing ISWI chromatin-remodeling complexes do not have the ability to slide mononucleosomes to the center of a DNA template. Binds to core histones together with RSF1, and is required for the assembly of regular nucleosome arrays by the RSF-5 ISWI chromatin-remodeling complex. Involved in DNA replication and together with BAZ1A/ACF1 is required for replication of pericentric heterochromatin in S-phase. Probably plays a role in repression of RNA polymerase I dependent transcription of the rDNA locus, through the recruitment of the SIN3/HDAC1 corepressor complex to the rDNA promoter. Essential component of the WICH-5 ISWI chromatin-remodeling complex (also called the WICH complex), a chromatin-remodeling complex that mobilizes nucleosomes and reconfigures irregular chromatin to a regular nucleosomal array structure. The WICH-5 ISWI chromatin-remodeling complex regulates the transcription of various genes, has a role in RNA polymerase I transcription. Within the B-WICH complex has a role in RNA polymerase III transcription. Mediates the histone H2AX phosphorylation at 'Tyr-142', and is involved in the maintenance of chromatin structures during DNA replication processes. Essential component of NoRC-5 ISWI chromatin-remodeling complex, a complex that mediates silencing of a fraction of rDNA by recruiting histone-modifying enzymes and DNA methyltransferases, leading to heterochromatin formation and transcriptional silencing. This is SWI/SNF-related matrix-associated actin-dependent regulator of chromatin subfamily A member 5 from Homo sapiens (Human).